The chain runs to 260 residues: tRNA (guanine-N(1)-)-methyltransferase (260 aa).

Residues Gly117 and 137-142 each bind S-adenosyl-L-methionine; that span reads LGDFVL.

This sequence belongs to the RNA methyltransferase TrmD family. Homodimer.

It is found in the cytoplasm. It catalyses the reaction guanosine(37) in tRNA + S-adenosyl-L-methionine = N(1)-methylguanosine(37) in tRNA + S-adenosyl-L-homocysteine + H(+). In terms of biological role, specifically methylates guanosine-37 in various tRNAs. In Cupriavidus necator (strain ATCC 17699 / DSM 428 / KCTC 22496 / NCIMB 10442 / H16 / Stanier 337) (Ralstonia eutropha), this protein is tRNA (guanine-N(1)-)-methyltransferase.